A 316-amino-acid chain; its full sequence is 4-hydroxy-3-methylbut-2-enyl diphosphate reductase (316 aa).

C12 provides a ligand contact to [4Fe-4S] cluster. The (2E)-4-hydroxy-3-methylbut-2-enyl diphosphate site is built by H41 and H74. 2 residues coordinate dimethylallyl diphosphate: H41 and H74. H41 and H74 together coordinate isopentenyl diphosphate. Residue C96 participates in [4Fe-4S] cluster binding. H124 is a (2E)-4-hydroxy-3-methylbut-2-enyl diphosphate binding site. Residue H124 coordinates dimethylallyl diphosphate. Residue H124 coordinates isopentenyl diphosphate. E126 serves as the catalytic Proton donor. (2E)-4-hydroxy-3-methylbut-2-enyl diphosphate is bound at residue T169. [4Fe-4S] cluster is bound at residue C199. (2E)-4-hydroxy-3-methylbut-2-enyl diphosphate contacts are provided by S227, S228, N229, and S271. Residues S227, S228, N229, and S271 each coordinate dimethylallyl diphosphate. Residues S227, S228, N229, and S271 each coordinate isopentenyl diphosphate.

Belongs to the IspH family. The cofactor is [4Fe-4S] cluster.

It catalyses the reaction isopentenyl diphosphate + 2 oxidized [2Fe-2S]-[ferredoxin] + H2O = (2E)-4-hydroxy-3-methylbut-2-enyl diphosphate + 2 reduced [2Fe-2S]-[ferredoxin] + 2 H(+). The enzyme catalyses dimethylallyl diphosphate + 2 oxidized [2Fe-2S]-[ferredoxin] + H2O = (2E)-4-hydroxy-3-methylbut-2-enyl diphosphate + 2 reduced [2Fe-2S]-[ferredoxin] + 2 H(+). It participates in isoprenoid biosynthesis; dimethylallyl diphosphate biosynthesis; dimethylallyl diphosphate from (2E)-4-hydroxy-3-methylbutenyl diphosphate: step 1/1. The protein operates within isoprenoid biosynthesis; isopentenyl diphosphate biosynthesis via DXP pathway; isopentenyl diphosphate from 1-deoxy-D-xylulose 5-phosphate: step 6/6. Its function is as follows. Catalyzes the conversion of 1-hydroxy-2-methyl-2-(E)-butenyl 4-diphosphate (HMBPP) into a mixture of isopentenyl diphosphate (IPP) and dimethylallyl diphosphate (DMAPP). Acts in the terminal step of the DOXP/MEP pathway for isoprenoid precursor biosynthesis. The chain is 4-hydroxy-3-methylbut-2-enyl diphosphate reductase from Vibrio vulnificus (strain CMCP6).